Consider the following 252-residue polypeptide: uncharacterized protein (252 aa).

The protein belongs to the methyltransferase superfamily.

This is an uncharacterized protein from Mycobacterium sp. (strain KMS).